Here is a 527-residue protein sequence, read N- to C-terminus: Probable malate:quinone oxidoreductase (527 aa).

It belongs to the MQO family. It depends on FAD as a cofactor.

It catalyses the reaction (S)-malate + a quinone = a quinol + oxaloacetate. It functions in the pathway carbohydrate metabolism; tricarboxylic acid cycle; oxaloacetate from (S)-malate (quinone route): step 1/1. The polypeptide is Probable malate:quinone oxidoreductase (Pectobacterium atrosepticum (strain SCRI 1043 / ATCC BAA-672) (Erwinia carotovora subsp. atroseptica)).